The primary structure comprises 93 residues: UPF0369 protein RC0209 (93 aa).

Positions 1-24 (MDDKKDNRHLSKPAYREECTGDTE) are disordered. The RPE1 insert domain maps to 8 to 55 (RHLSKPAYREECTGDTERSTTAYMDILEDVSTGSTSKLPLEAKFVKIS).

It belongs to the SDHAF4 family.

This Rickettsia conorii (strain ATCC VR-613 / Malish 7) protein is UPF0369 protein RC0209.